We begin with the raw amino-acid sequence, 379 residues long: Odorant receptor 23a (379 aa).

Topologically, residues M1–S36 are cytoplasmic. The helical transmembrane segment at M37–F57 threads the bilayer. Topologically, residues E58–N64 are extracellular. N-linked (GlcNAc...) asparagine glycosylation occurs at N64. The chain crosses the membrane as a helical span at residues F65 to A85. Residues Q86 to K125 are Cytoplasmic-facing. The chain crosses the membrane as a helical span at residues L126–T146. Residues E147 to N162 are Extracellular-facing. A helical membrane pass occupies residues S163–M183. Over Q184–M253 the chain is Cytoplasmic. A helical transmembrane segment spans residues V254–V274. Topologically, residues E275–R280 are extracellular. The chain crosses the membrane as a helical span at residues I281–G301. Over T302–R340 the chain is Cytoplasmic. Residues M341 to W361 form a helical membrane-spanning segment. Residues K362–S379 are Extracellular-facing.

It belongs to the insect chemoreceptor superfamily. Heteromeric odorant receptor channel (TC 1.A.69) family. Or2a subfamily. In terms of assembly, interacts with Orco. Complexes exist early in the endomembrane system in olfactory sensory neurons (OSNs), coupling these complexes to the conserved ciliary trafficking pathway. In terms of tissue distribution, expressed in 10-40 sensory cells in the third antenna segment and in the maxillary palp.

It localises to the cell membrane. Its function is as follows. Odorant receptor which mediates acceptance or avoidance behavior, depending on its substrates. The odorant receptor repertoire encodes a large collection of odor stimuli that vary widely in identity, intensity, and duration. May form a complex with Orco to form odorant-sensing units, providing sensitive and prolonged odorant signaling and calcium permeability. The polypeptide is Odorant receptor 23a (Or23a) (Drosophila melanogaster (Fruit fly)).